A 224-amino-acid chain; its full sequence is tRNA (guanine-N(7)-)-methyltransferase (224 aa).

S-adenosyl-L-methionine is bound by residues glutamate 54, glutamate 79, glutamate 106, and aspartate 129. Aspartate 129 is a catalytic residue. Residues lysine 133 and aspartate 165 each contribute to the substrate site.

The protein belongs to the class I-like SAM-binding methyltransferase superfamily. TrmB family.

The enzyme catalyses guanosine(46) in tRNA + S-adenosyl-L-methionine = N(7)-methylguanosine(46) in tRNA + S-adenosyl-L-homocysteine. It functions in the pathway tRNA modification; N(7)-methylguanine-tRNA biosynthesis. Catalyzes the formation of N(7)-methylguanine at position 46 (m7G46) in tRNA. The protein is tRNA (guanine-N(7)-)-methyltransferase of Chlamydia muridarum (strain MoPn / Nigg).